A 154-amino-acid chain; its full sequence is Transcriptional repressor NrdR (154 aa).

A zinc finger lies at 3 to 34 (CPYCQSEDTQVKDSRPAEDGAAIRRRRACPVC). One can recognise an ATP-cone domain in the interval 49-139 (LVVVKRTGRK…VYRNFREAKD (91 aa)).

The protein belongs to the NrdR family. It depends on Zn(2+) as a cofactor.

Its function is as follows. Negatively regulates transcription of bacterial ribonucleotide reductase nrd genes and operons by binding to NrdR-boxes. The sequence is that of Transcriptional repressor NrdR from Chelativorans sp. (strain BNC1).